The chain runs to 488 residues: Patatin-like protein 7 (488 aa).

Residues Gln-23–Met-49 form a disordered region. The span at Ala-32–Thr-47 shows a compositional bias: polar residues. The region spanning Leu-101–Ile-301 is the PNPLA domain. Residues Gly-105–Gly-110 carry the GXGXXG motif. The Nucleophile role is filled by Ser-145.

It belongs to the patatin family. In terms of tissue distribution, highly expressed in roots and at lower levels in leaves, stems, flowers and siliques.

The protein localises to the cell membrane. Its function is as follows. Possesses non-specific lipolytic acyl hydrolase (LAH) activity. Catalyzes the hydrolysis of the galactolipids monogalactosyldiacylglycerol (MGDG) and digalactosyldiacylglycerol (DGDG), and the phoshpolipids phosphatidylcholine (PC), phosphatidylethanolamine (PE), phosphatidylglycerol (PG), phosphatidic acid (PA), phosphatidylserine (PS). Favors the release of fatty acid at the sn-2 position for PC. Possesses acyl-CoA thioesterase activity. Negatively affects disease resistance to the necrotic fungal pathogen Botrytis cinerea and the avirulent bacteria Pseudomonas syringae by promoting cell death and reducing the efficiency of the hypersensitive response, respectively. However, PLP2 contributes to resistance to cucumber mosaic virus (CMV), an obligate parasite inducing hypersensitive response. May negatively regulate oxylipin production, possibly via participating in membrane repair that includes removal of oxidatively modified lipids. Enzymatic products of PLP2 may influence cellulose content and cell elongation. The sequence is that of Patatin-like protein 7 (PLP7) from Arabidopsis thaliana (Mouse-ear cress).